A 61-amino-acid polypeptide reads, in one-letter code: Adipokinetic prohormone type 2 (61 aa).

Residues 1–22 (MTQSCTLTLVLVVAVLAALATA) form the signal peptide. At glutamine 23 the chain carries Pyrrolidone carboxylic acid. Residue tryptophan 30 is modified to Tryptophan amide.

It belongs to the AKH/HRTH/RPCH family. Adipokinetic hormone precursor-related peptide (APRP) can form three type of disulfide-bond dimers: p1 (alpha-alpha), p2 (alpha-beta), and p3 (beta-beta).

It localises to the secreted. Functionally, this hormone, released from cells in the corpora cardiaca, causes release of diglycerides from the fat body and stimulation of muscles to use these diglycerides as an energy source during energy-demanding processes. In Locusta migratoria (Migratory locust), this protein is Adipokinetic prohormone type 2.